Consider the following 815-residue polypeptide: Lon protease 2 (815 aa).

One can recognise a Lon N-terminal domain in the interval 19–212 (LPVLPLINTV…RLSVVLSQEI (194 aa)). 365–372 (GPPGVGKT) provides a ligand contact to ATP. Residues 601-782 (RDEIGVATGM…DEVLPIAFVS (182 aa)) enclose the Lon proteolytic domain. Active-site residues include serine 688 and lysine 731.

The protein belongs to the peptidase S16 family. As to quaternary structure, homohexamer. Organized in a ring with a central cavity.

The protein resides in the cytoplasm. It carries out the reaction Hydrolysis of proteins in presence of ATP.. ATP-dependent serine protease that mediates the selective degradation of mutant and abnormal proteins as well as certain short-lived regulatory proteins. Required for cellular homeostasis and for survival from DNA damage and developmental changes induced by stress. Degrades polypeptides processively to yield small peptide fragments that are 5 to 10 amino acids long. Binds to DNA in a double-stranded, site-specific manner. This is Lon protease 2 from Herpetosiphon aurantiacus (strain ATCC 23779 / DSM 785 / 114-95).